Consider the following 322-residue polypeptide: Homeobox protein DBX1-B (322 aa).

Positions 179–238 form a DNA-binding region, homeobox; that stretch reads GMLRRAVFSDVQRKALEKMFQKQKYISKPDRKKLATKLGLKDSQVKIWFQNRRMKWRNSK. Disordered stretches follow at residues 238 to 266 and 296 to 322; these read KERE…LSDV and DLHF…ITVS. Residues 312 to 322 show a composition bias toward acidic residues; the sequence is SESEDEEITVS.

Belongs to the H2.0 homeobox family.

It is found in the nucleus. This Danio rerio (Zebrafish) protein is Homeobox protein DBX1-B (dbx1b).